The chain runs to 458 residues: Divalent metal cation transporter MntH (458 aa).

Helical transmembrane passes span 38–58 (GFWK…VGYM), 86–106 (LIAM…GMDL), 119–139 (GIFL…AEII), 151–171 (IPLL…LLLM), 180–200 (AIVA…VILA), 223–243 (MLFL…LYLH), 275–295 (LTIA…MFYG), 315–335 (IVGS…LLAS), 370–390 (GLSI…EAQV), 395–415 (IYSQ…LTLF), and 436–456 (WFVT…TVGL).

This sequence belongs to the NRAMP family.

It is found in the cell membrane. Functionally, h(+)-stimulated, divalent metal cation uptake system. The protein is Divalent metal cation transporter MntH of Latilactobacillus sakei subsp. sakei (strain 23K) (Lactobacillus sakei subsp. sakei).